A 314-amino-acid chain; its full sequence is Formate-nitrite transporter (314 aa).

Residues 1 to 47 lie on the Cytoplasmic side of the membrane; the sequence is MSKGKSKYVIDPISVKTACTSEESYIRCVEYGKGKAHYPNLSLLAKA. A helical membrane pass occupies residues 48–68; it reads ILAGVFVGVCAHASGIAGGHF. The Extracellular portion of the chain corresponds to 69–78; it reads YYHKLREYVG. A helical membrane pass occupies residues 79-99; it reads ISMSAFVYGFTFPIAFLCIIA. The Cytoplasmic segment spans residues 100 to 128; sequence TGSDLFTGNTLAVTTALLQRKVSLLQYLR. Residues 129–149 traverse the membrane as a helical segment; sequence VMSISLFGNYLGAVSFAFFVS. The Extracellular segment spans residues 150–185; that stretch reads HLSGAYEKHTDVTKNHIFQFLNDIAEKKISHTFIQC. Residues 186–206 traverse the membrane as a helical segment; the sequence is ICLAIGCNIFVCLAVYFVLTI. Topologically, residues 207-211 are cytoplasmic; it reads KDGSG. The helical transmembrane segment at 212 to 232 threads the bilayer; that stretch reads MVFSVFFAVYAFAIAGYEHII. At 233–257 the chain is on the extracellular side; that stretch reads ANMYTLNLALMVEAKVTWSKVYFHN. Residues 258 to 278 traverse the membrane as a helical segment; that stretch reads LLPTLIGNYIAGALVLACPLF. At 279–314 the chain is on the cytoplasmic side; it reads YIYRNSYRDYERTRGDGSNCGLRSLSIEMQNGSNGN.

Belongs to the FNT transporter (TC 1.A.16) family. In terms of assembly, homopentamer.

The protein localises to the cell membrane. It is found in the vacuole membrane. It catalyses the reaction (S)-lactate(in) + H(+)(in) = (S)-lactate(out) + H(+)(out). The enzyme catalyses formate(in) + H(+)(in) = formate(out) + H(+)(out). It carries out the reaction pyruvate(out) + H(+)(out) = pyruvate(in) + H(+)(in). The catalysed reaction is acetate(out) + H(+)(out) = acetate(in) + H(+)(in). With respect to regulation, inhibited by the Malaria Box compound MMV007839 and its derivatives BH296 and BH267.meta. In terms of biological role, monocarboxylate-proton symporter that mediates the efflux of the waste product lactate in the intraerythrocytic parasites; active in acidic-to-neutral pH range. Transports L-lactate. The chain is Formate-nitrite transporter from Plasmodium knowlesi (strain H).